The primary structure comprises 193 residues: ATP synthase subunit b (193 aa).

Residues 35 to 55 (IPMMLATFIAFVIVFLLLFFF) traverse the membrane as a helical segment.

Belongs to the ATPase B chain family. As to quaternary structure, F-type ATPases have 2 components, F(1) - the catalytic core - and F(0) - the membrane proton channel. F(1) has five subunits: alpha(3), beta(3), gamma(1), delta(1), epsilon(1). F(0) has three main subunits: a(1), b(2) and c(10-14). The alpha and beta chains form an alternating ring which encloses part of the gamma chain. F(1) is attached to F(0) by a central stalk formed by the gamma and epsilon chains, while a peripheral stalk is formed by the delta and b chains.

It is found in the cell membrane. In terms of biological role, f(1)F(0) ATP synthase produces ATP from ADP in the presence of a proton or sodium gradient. F-type ATPases consist of two structural domains, F(1) containing the extramembraneous catalytic core and F(0) containing the membrane proton channel, linked together by a central stalk and a peripheral stalk. During catalysis, ATP synthesis in the catalytic domain of F(1) is coupled via a rotary mechanism of the central stalk subunits to proton translocation. Its function is as follows. Component of the F(0) channel, it forms part of the peripheral stalk, linking F(1) to F(0). The protein is ATP synthase subunit b of Mycoplasmopsis synoviae (strain 53) (Mycoplasma synoviae).